The primary structure comprises 90 residues: RNA-binding protein Hfq (90 aa).

A Sm domain is found at 10–70; that stretch reads DGFLNLLRRE…LSTITPARPL (61 aa).

This sequence belongs to the Hfq family. As to quaternary structure, homohexamer.

Functionally, RNA chaperone that binds small regulatory RNA (sRNAs) and mRNAs to facilitate mRNA translational regulation in response to envelope stress, environmental stress and changes in metabolite concentrations. Also binds with high specificity to tRNAs. The protein is RNA-binding protein Hfq of Symbiobacterium thermophilum (strain DSM 24528 / JCM 14929 / IAM 14863 / T).